A 283-amino-acid polypeptide reads, in one-letter code: Homeobox protein BarH-like 2 (283 aa).

Disordered stretches follow at residues Ala107 to Arg141 and Lys198 to Ser283. The span at Ser122–Pro132 shows a compositional bias: polar residues. The segment at residues Arg139–Lys198 is a DNA-binding region (homeobox). The segment covering Gln268–Ser277 has biased composition (low complexity).

It belongs to the BAR homeobox family. In terms of tissue distribution, nervous system, particularly in the telencephalon, spinal cord, and dorsal root ganglia.

It is found in the nucleus. Transcription factor. Binds optimally to the DNA consensus sequence 5'-YYTAATGRTTTTY-3'. May control the expression of neural adhesion molecules such as L1 or Ng-CAM during embryonic development of both the central and peripherical nervous system. May be involved in controlling adhesive processes in keratinizing epithelia. The protein is Homeobox protein BarH-like 2 (Barx2) of Mus musculus (Mouse).